The sequence spans 84 residues: Beta-toxin Ct16 (84 aa).

The first 19 residues, 1 to 19, serve as a signal peptide directing secretion; the sequence is MNYFILLFVATFLLLDVNC. The LCN-type CS-alpha/beta domain occupies 21–80; it reads KDGYPVDANNCKFECWKNEYCDELCKAKRAESGYCYKLKLSCWCEGLPDDEPTKTSDRCY. 4 disulfides stabilise this stretch: C31–C79, C35–C55, C41–C62, and C45–C64. Threonine amide is present on T82.

The protein belongs to the long (4 C-C) scorpion toxin superfamily. Sodium channel inhibitor family. Alpha subfamily. As to expression, expressed by the venom gland.

The protein resides in the secreted. Functionally, alpha toxins bind voltage-independently at site-3 of sodium channels (Nav) and inhibit the inactivation of the activated channels, thereby blocking neuronal transmission. Is possibly toxic to mice. The sequence is that of Beta-toxin Ct16 from Centruroides tecomanus (Scorpion).